Reading from the N-terminus, the 309-residue chain is Aspartate carbamoyltransferase catalytic subunit (309 aa).

Residues Arg-55 and Thr-56 each contribute to the carbamoyl phosphate site. Lys-85 is an L-aspartate binding site. Arg-106, His-135, and Gln-138 together coordinate carbamoyl phosphate. Positions 168 and 230 each coordinate L-aspartate. Carbamoyl phosphate contacts are provided by Leu-268 and Pro-269.

This sequence belongs to the aspartate/ornithine carbamoyltransferase superfamily. ATCase family. Heterododecamer (2C3:3R2) of six catalytic PyrB chains organized as two trimers (C3), and six regulatory PyrI chains organized as three dimers (R2).

The catalysed reaction is carbamoyl phosphate + L-aspartate = N-carbamoyl-L-aspartate + phosphate + H(+). It participates in pyrimidine metabolism; UMP biosynthesis via de novo pathway; (S)-dihydroorotate from bicarbonate: step 2/3. In terms of biological role, catalyzes the condensation of carbamoyl phosphate and aspartate to form carbamoyl aspartate and inorganic phosphate, the committed step in the de novo pyrimidine nucleotide biosynthesis pathway. The polypeptide is Aspartate carbamoyltransferase catalytic subunit (Aliivibrio fischeri (strain ATCC 700601 / ES114) (Vibrio fischeri)).